The sequence spans 199 residues: dITP/XTP pyrophosphatase (199 aa).

7–12 is a substrate binding site; that stretch reads TGNAGK. Residue D68 is the Proton acceptor of the active site. D68 is a binding site for Mg(2+). Residues S69, 153–156, K176, and 181–182 contribute to the substrate site; these read FGYD and HR.

The protein belongs to the HAM1 NTPase family. Homodimer. Mg(2+) is required as a cofactor.

It catalyses the reaction XTP + H2O = XMP + diphosphate + H(+). The catalysed reaction is dITP + H2O = dIMP + diphosphate + H(+). It carries out the reaction ITP + H2O = IMP + diphosphate + H(+). Functionally, pyrophosphatase that catalyzes the hydrolysis of nucleoside triphosphates to their monophosphate derivatives, with a high preference for the non-canonical purine nucleotides XTP (xanthosine triphosphate), dITP (deoxyinosine triphosphate) and ITP. Seems to function as a house-cleaning enzyme that removes non-canonical purine nucleotides from the nucleotide pool, thus preventing their incorporation into DNA/RNA and avoiding chromosomal lesions. This is dITP/XTP pyrophosphatase from Halorhodospira halophila (strain DSM 244 / SL1) (Ectothiorhodospira halophila (strain DSM 244 / SL1)).